A 145-amino-acid polypeptide reads, in one-letter code: D-aminoacyl-tRNA deacylase (145 aa).

The short motif at 137–138 (GP) is the Gly-cisPro motif, important for rejection of L-amino acids element.

Belongs to the DTD family. As to quaternary structure, homodimer.

It localises to the cytoplasm. It catalyses the reaction glycyl-tRNA(Ala) + H2O = tRNA(Ala) + glycine + H(+). It carries out the reaction a D-aminoacyl-tRNA + H2O = a tRNA + a D-alpha-amino acid + H(+). An aminoacyl-tRNA editing enzyme that deacylates mischarged D-aminoacyl-tRNAs. Also deacylates mischarged glycyl-tRNA(Ala), protecting cells against glycine mischarging by AlaRS. Acts via tRNA-based rather than protein-based catalysis; rejects L-amino acids rather than detecting D-amino acids in the active site. By recycling D-aminoacyl-tRNA to D-amino acids and free tRNA molecules, this enzyme counteracts the toxicity associated with the formation of D-aminoacyl-tRNA entities in vivo and helps enforce protein L-homochirality. The chain is D-aminoacyl-tRNA deacylase from Shewanella woodyi (strain ATCC 51908 / MS32).